The sequence spans 135 residues: UPF0355 protein SH2586 (135 aa).

A disordered region spans residues 105–135 (NSSHDEVEENNSAYEEIDITHYANESKGPKS).

It belongs to the UPF0355 family.

The polypeptide is UPF0355 protein SH2586 (Staphylococcus haemolyticus (strain JCSC1435)).